Reading from the N-terminus, the 236-residue chain is Protein-S-isoprenylcysteine O-methyltransferase (236 aa).

Transmembrane regions (helical) follow at residues 3–23 (NLHTSIAVASICLTSAFLGCV), 24–44 (FGLGFFVWIIYGYSIGGFFAF), 76–96 (AYWLAMLVGLLECLLSGGKSF), and 108–128 (FLINFIFSVYQTSALGFLCLG). Residues 155-158 (HLLV), Y163, and 168-171 (HPSY) each bind S-adenosyl-L-methionine. Residues 174–194 (FFIWALGTQMLLGNFVSTLLF) form a helical membrane-spanning segment. R205 serves as a coordination point for substrate. E209 is a binding site for S-adenosyl-L-methionine.

Belongs to the class VI-like SAM-binding methyltransferase superfamily. Isoprenylcysteine carboxyl methyltransferase family.

It localises to the membrane. The catalysed reaction is [protein]-C-terminal S-[(2E,6E)-farnesyl]-L-cysteine + S-adenosyl-L-methionine = [protein]-C-terminal S-[(2E,6E)-farnesyl]-L-cysteine methyl ester + S-adenosyl-L-homocysteine. In terms of biological role, mediates C-terminal methylation of the isoprenylated C-terminal cysteine in M-factor. This chain is Protein-S-isoprenylcysteine O-methyltransferase (mam4), found in Schizosaccharomyces pombe (strain 972 / ATCC 24843) (Fission yeast).